The following is a 105-amino-acid chain: Large ribosomal subunit protein uL24 (105 aa).

It belongs to the universal ribosomal protein uL24 family. As to quaternary structure, part of the 50S ribosomal subunit.

Its function is as follows. One of two assembly initiator proteins, it binds directly to the 5'-end of the 23S rRNA, where it nucleates assembly of the 50S subunit. In terms of biological role, one of the proteins that surrounds the polypeptide exit tunnel on the outside of the subunit. This Novosphingobium aromaticivorans (strain ATCC 700278 / DSM 12444 / CCUG 56034 / CIP 105152 / NBRC 16084 / F199) protein is Large ribosomal subunit protein uL24.